We begin with the raw amino-acid sequence, 151 residues long: Large ribosomal subunit protein bL9 (151 aa).

Belongs to the bacterial ribosomal protein bL9 family.

Binds to the 23S rRNA. This Rhodococcus jostii (strain RHA1) protein is Large ribosomal subunit protein bL9.